A 62-amino-acid chain; its full sequence is Rhodotorucin-A peptides type 1 (62 aa).

The propeptide occupies 1-3 (MVA). C14 carries the S-farnesyl cysteine lipid modification. A propeptide spanning residues 15–18 (TVSK) is cleaved from the precursor. The S-farnesyl cysteine moiety is linked to residue C29. Positions 30-33 (TVSK) are excised as a propeptide. C44 carries the S-farnesyl cysteine lipid modification. Positions 45-48 (TVSK) are excised as a propeptide. C59 carries S-farnesyl cysteine lipidation. A propeptide spanning residues 60 to 62 (TVA) is cleaved from the precursor.

The protein localises to the cell membrane. In terms of biological role, rhodotorucin-A is a mating pheromone in cells of mating type A of Rhodosporidium toruloides. The polypeptide is Rhodotorucin-A peptides type 1 (RHA1) (Rhodotorula toruloides (Yeast)).